Here is a 433-residue protein sequence, read N- to C-terminus: Protein translocase subunit SecY (433 aa).

The next 10 helical transmembrane spans lie at 17-37 (IVFT…PIPG), 71-91 (IFAL…LMSV), 117-137 (LTVL…ESIV), 141-161 (GPVV…TLVV), 184-204 (LIIF…MFEL), 212-232 (PLIA…IIFF), 268-288 (GVIP…LANF), 310-330 (YILL…AIVF), 366-386 (LTVI…LLMN), and 388-408 (YVIS…VVLD).

Belongs to the SecY/SEC61-alpha family. In terms of assembly, component of the Sec protein translocase complex. Heterotrimer consisting of SecY, SecE and SecG subunits. The heterotrimers can form oligomers, although 1 heterotrimer is thought to be able to translocate proteins. Interacts with the ribosome. Interacts with SecDF, and other proteins may be involved. Interacts with SecA.

It localises to the cell inner membrane. Its function is as follows. The central subunit of the protein translocation channel SecYEG. Consists of two halves formed by TMs 1-5 and 6-10. These two domains form a lateral gate at the front which open onto the bilayer between TMs 2 and 7, and are clamped together by SecE at the back. The channel is closed by both a pore ring composed of hydrophobic SecY resides and a short helix (helix 2A) on the extracellular side of the membrane which forms a plug. The plug probably moves laterally to allow the channel to open. The ring and the pore may move independently. In Rickettsia felis (strain ATCC VR-1525 / URRWXCal2) (Rickettsia azadi), this protein is Protein translocase subunit SecY.